The primary structure comprises 435 residues: Eukaryotic translation initiation factor 3 subunit E (435 aa).

Residues 219-392 (FFNHAKGRDL…GHVVMGTQPL (174 aa)) enclose the PCI domain.

This sequence belongs to the eIF-3 subunit E family. As to quaternary structure, component of the eukaryotic translation initiation factor 3 (eIF-3) complex.

The protein localises to the cytoplasm. Component of the eukaryotic translation initiation factor 3 (eIF-3) complex, which is involved in protein synthesis of a specialized repertoire of mRNAs and, together with other initiation factors, stimulates binding of mRNA and methionyl-tRNAi to the 40S ribosome. The eIF-3 complex specifically targets and initiates translation of a subset of mRNAs involved in cell proliferation. The protein is Eukaryotic translation initiation factor 3 subunit E (eIF3-S6) of Aedes aegypti (Yellowfever mosquito).